A 197-amino-acid polypeptide reads, in one-letter code: Anthranilate synthase component 2 (197 aa).

A Glutamine amidotransferase type-1 domain is found at 5–197; it reads KVLVIDNIDS…LIKNFVESEY (193 aa). 55–57 is a binding site for L-glutamine; that stretch reads GPK. C80 functions as the Nucleophile; for GATase activity in the catalytic mechanism. L-glutamine is bound by residues Q84 and 130-131; that span reads SL. Catalysis depends on for GATase activity residues H168 and E170.

As to quaternary structure, heterotetramer consisting of two non-identical subunits: a beta subunit (TrpG) and a large alpha subunit (TrpE).

The enzyme catalyses chorismate + L-glutamine = anthranilate + pyruvate + L-glutamate + H(+). The protein operates within amino-acid biosynthesis; L-tryptophan biosynthesis; L-tryptophan from chorismate: step 1/5. Part of a heterotetrameric complex that catalyzes the two-step biosynthesis of anthranilate, an intermediate in the biosynthesis of L-tryptophan. In the first step, the glutamine-binding beta subunit (TrpG) of anthranilate synthase (AS) provides the glutamine amidotransferase activity which generates ammonia as a substrate that, along with chorismate, is used in the second step, catalyzed by the large alpha subunit of AS (TrpE) to produce anthranilate. In the absence of TrpG, TrpE can synthesize anthranilate directly from chorismate and high concentrations of ammonia. This is Anthranilate synthase component 2 (trpG) from Methanocaldococcus jannaschii (strain ATCC 43067 / DSM 2661 / JAL-1 / JCM 10045 / NBRC 100440) (Methanococcus jannaschii).